Reading from the N-terminus, the 222-residue chain is 7-cyano-7-deazaguanine synthase (222 aa).

11–21 (FSGGQDSTTCL) is a binding site for ATP. Cys187, Cys195, Cys198, and Cys201 together coordinate Zn(2+).

Belongs to the QueC family. Zn(2+) is required as a cofactor.

The enzyme catalyses 7-carboxy-7-deazaguanine + NH4(+) + ATP = 7-cyano-7-deazaguanine + ADP + phosphate + H2O + H(+). It participates in purine metabolism; 7-cyano-7-deazaguanine biosynthesis. In terms of biological role, catalyzes the ATP-dependent conversion of 7-carboxy-7-deazaguanine (CDG) to 7-cyano-7-deazaguanine (preQ(0)). The protein is 7-cyano-7-deazaguanine synthase of Actinobacillus pleuropneumoniae serotype 7 (strain AP76).